We begin with the raw amino-acid sequence, 239 residues long: MAKPCGVRLSGEARKQVDVFRQNLFQEADDFLCTFLPRKIISLSQLLQEDSLNVADLSSLRAPLDIPIPDPPPKDDEMETDKQEKKEVPKCGYLPGNEKLLALLALVKPEVWTLKEKCILVITWIQHLIPKIEDGNDFGVAIQEKVLERVNAVKTKVEAFQTTISKYFSERGDAVAKASKDTHVMDYRALVHERDEAAYGALRAMVLDLRAFYAELYHIISSNLEKIVNPKGEEKPSMY.

Ala-2 carries the N-acetylalanine modification. Ser-10 carries the post-translational modification Phosphoserine. Residues 65-87 (DIPIPDPPPKDDEMETDKQEKKE) are disordered. Positions 72–87 (PPKDDEMETDKQEKKE) are enriched in basic and acidic residues.

It belongs to the PA28 family. In terms of assembly, heterodimer of PSME1 and PSME2, which forms a hexameric ring.

Functionally, implicated in immunoproteasome assembly and required for efficient antigen processing. The PA28 activator complex enhances the generation of class I binding peptides by altering the cleavage pattern of the proteasome. The polypeptide is Proteasome activator complex subunit 2 (Psme2) (Mus musculus (Mouse)).